The primary structure comprises 1222 residues: A disintegrin and metalloproteinase with thrombospondin motifs 16 (1222 aa).

Positions 1-20 (MESRGCAALWVLLLAQVSEQ) are cleaved as a signal peptide. A propeptide spanning residues 21 to 277 (QTPACALGLA…EYKPSSRHKR (257 aa)) is cleaved from the precursor. N-linked (GlcNAc...) asparagine glycans are attached at residues asparagine 154 and asparagine 190. The Cysteine switch signature appears at 245–253 (HFCGRRKKY). Cysteine 247 provides a ligand contact to Zn(2+). The region spanning 288 to 493 (LNVETLVVVD…AQAICLADQP (206 aa)) is the Peptidase M12B domain. Asparagine 308 carries an N-linked (GlcNAc...) asparagine glycan. 11 disulfides stabilise this stretch: cysteine 364–cysteine 415, cysteine 390–cysteine 397, cysteine 409–cysteine 488, cysteine 448–cysteine 472, cysteine 516–cysteine 541, cysteine 527–cysteine 548, cysteine 536–cysteine 567, cysteine 561–cysteine 572, cysteine 596–cysteine 633, cysteine 600–cysteine 638, and cysteine 611–cysteine 623. A Zn(2+)-binding site is contributed by histidine 431. Residue glutamate 432 is part of the active site. Histidine 435 and histidine 441 together coordinate Zn(2+). The region spanning 494 to 583 (KPVKEYKYPE…KYGDEGPKPT (90 aa)) is the Disintegrin domain. The 56-residue stretch at 584–639 (HGHWSDWSPWSPCSRTCGGGISHRDRLCTNPRPSHGGKFCQGSTRTLKLCNSQRCP) folds into the TSP type-1 1 domain. 6 N-linked (GlcNAc...) asparagine glycosylation sites follow: asparagine 739, asparagine 778, asparagine 825, asparagine 833, asparagine 903, and asparagine 933. Residues 745–871 (THRGLYSKHH…KTPAAQPSYS (127 aa)) are spacer. 5 TSP type-1 domains span residues 872 to 920 (WAIV…LVPC), 925 to 985 (CPSS…QSCP), 986 to 1046 (PAWS…KRCH), 1049 to 1113 (KKLQ…IPCP), and 1125 to 1179 (RGSW…HFCP). The 38-residue stretch at 1184–1221 (RGTFCKDLFHWCYLVPQHGMCGHRFYSKQCCNTCSKSN) folds into the PLAC domain.

Requires Zn(2+) as cofactor. In terms of processing, the precursor is cleaved by a furin endopeptidase. Glycosylated. Can be O-fucosylated by POFUT2 on a serine or a threonine residue found within the consensus sequence C1-X(2)-(S/T)-C2-G of the TSP type-1 repeat domains where C1 and C2 are the first and second cysteine residue of the repeat, respectively. Fucosylated repeats can then be further glycosylated by the addition of a beta-1,3-glucose residue by the glucosyltransferase, B3GALTL. Fucosylation mediates the efficient secretion of ADAMTS family members. Can also be C-glycosylated with one or two mannose molecules on tryptophan residues within the consensus sequence W-X-X-W of the TPRs, and N-glycosylated. These other glycosylations can also facilitate secretion.

It is found in the secreted. The protein resides in the extracellular space. Its subcellular location is the extracellular matrix. The polypeptide is A disintegrin and metalloproteinase with thrombospondin motifs 16 (Adamts16) (Mus musculus (Mouse)).